The primary structure comprises 215 residues: Pyridoxine/pyridoxamine 5'-phosphate oxidase (215 aa).

Residues 9-12 (RRDY) and Lys-69 contribute to the substrate site. FMN is bound by residues 64–69 (RILLLK), 79–80 (FT), Lys-86, and Gln-108. Substrate contacts are provided by Tyr-126, Arg-130, and Ser-134. Residues 143–144 (QS) and Trp-188 each bind FMN. Position 194–196 (194–196 (RLH)) interacts with substrate. Arg-198 serves as a coordination point for FMN.

Belongs to the pyridoxamine 5'-phosphate oxidase family. Homodimer. The cofactor is FMN.

It catalyses the reaction pyridoxamine 5'-phosphate + O2 + H2O = pyridoxal 5'-phosphate + H2O2 + NH4(+). It carries out the reaction pyridoxine 5'-phosphate + O2 = pyridoxal 5'-phosphate + H2O2. It participates in cofactor metabolism; pyridoxal 5'-phosphate salvage; pyridoxal 5'-phosphate from pyridoxamine 5'-phosphate: step 1/1. The protein operates within cofactor metabolism; pyridoxal 5'-phosphate salvage; pyridoxal 5'-phosphate from pyridoxine 5'-phosphate: step 1/1. Its function is as follows. Catalyzes the oxidation of either pyridoxine 5'-phosphate (PNP) or pyridoxamine 5'-phosphate (PMP) into pyridoxal 5'-phosphate (PLP). This is Pyridoxine/pyridoxamine 5'-phosphate oxidase from Pseudomonas fluorescens (strain SBW25).